The chain runs to 295 residues: Elongation factor Ts (295 aa).

The segment at 79-82 (TDFV) is involved in Mg(2+) ion dislocation from EF-Tu.

Belongs to the EF-Ts family.

The protein resides in the cytoplasm. In terms of biological role, associates with the EF-Tu.GDP complex and induces the exchange of GDP to GTP. It remains bound to the aminoacyl-tRNA.EF-Tu.GTP complex up to the GTP hydrolysis stage on the ribosome. The protein is Elongation factor Ts of Bacillus cereus (strain G9842).